The primary structure comprises 102 residues: Co-chaperonin GroES (102 aa).

The protein belongs to the GroES chaperonin family. Heptamer of 7 subunits arranged in a ring. Interacts with the chaperonin GroEL.

The protein localises to the cytoplasm. Functionally, together with the chaperonin GroEL, plays an essential role in assisting protein folding. The GroEL-GroES system forms a nano-cage that allows encapsulation of the non-native substrate proteins and provides a physical environment optimized to promote and accelerate protein folding. GroES binds to the apical surface of the GroEL ring, thereby capping the opening of the GroEL channel. In Chlamydia muridarum (strain MoPn / Nigg), this protein is Co-chaperonin GroES.